The chain runs to 186 residues: Ribosome-recycling factor (186 aa).

This sequence belongs to the RRF family.

It localises to the cytoplasm. In terms of biological role, responsible for the release of ribosomes from messenger RNA at the termination of protein biosynthesis. May increase the efficiency of translation by recycling ribosomes from one round of translation to another. The protein is Ribosome-recycling factor of Cupriavidus taiwanensis (strain DSM 17343 / BCRC 17206 / CCUG 44338 / CIP 107171 / LMG 19424 / R1) (Ralstonia taiwanensis (strain LMG 19424)).